The following is a 932-amino-acid chain: Probable serine/threonine-protein kinase clkA (932 aa).

Positions 1-10 (MDRFQTKRKT) are enriched in basic residues. 3 disordered regions span residues 1–21 (MDRF…NNDY), 39–198 (YKNN…YGDT), and 212–562 (NDYD…TNTN). Low complexity-rich tracts occupy residues 11 to 21 (YSYNGYSNNDY) and 39 to 123 (YKNN…ENNY). Polar residues predominate over residues 124–143 (FQSENQSNKDQNSYFNSSYL). 4 stretches are compositionally biased toward low complexity: residues 148–196 (DNYN…NSYG), 218–305 (NNNN…NGGN), 314–342 (VFNN…NNDY), and 351–562 (NIYS…TNTN). A Protein kinase domain is found at 590-920 (YKVLCTVGSG…ASDALSHPFL (331 aa)). ATP contacts are provided by residues 596–604 (VGSGTFSTV) and lysine 619. Catalysis depends on aspartate 719, which acts as the Proton acceptor.

The protein belongs to the protein kinase superfamily. CMGC Ser/Thr protein kinase family.

It carries out the reaction L-seryl-[protein] + ATP = O-phospho-L-seryl-[protein] + ADP + H(+). The enzyme catalyses L-threonyl-[protein] + ATP = O-phospho-L-threonyl-[protein] + ADP + H(+). The chain is Probable serine/threonine-protein kinase clkA (clkA) from Dictyostelium discoideum (Social amoeba).